A 274-amino-acid chain; its full sequence is Diaminopimelate epimerase (274 aa).

Residues N11, Q44, and N64 each coordinate substrate. C73 acts as the Proton donor in catalysis. Residues 74–75, N157, N190, and 208–209 contribute to the substrate site; these read GN and ER. The Proton acceptor role is filled by C217. Substrate is bound at residue 218 to 219; it reads GS.

This sequence belongs to the diaminopimelate epimerase family. As to quaternary structure, homodimer.

It is found in the cytoplasm. It carries out the reaction (2S,6S)-2,6-diaminopimelate = meso-2,6-diaminopimelate. Its pathway is amino-acid biosynthesis; L-lysine biosynthesis via DAP pathway; DL-2,6-diaminopimelate from LL-2,6-diaminopimelate: step 1/1. In terms of biological role, catalyzes the stereoinversion of LL-2,6-diaminopimelate (L,L-DAP) to meso-diaminopimelate (meso-DAP), a precursor of L-lysine and an essential component of the bacterial peptidoglycan. The sequence is that of Diaminopimelate epimerase from Cronobacter sakazakii (strain ATCC BAA-894) (Enterobacter sakazakii).